The chain runs to 264 residues: Endochitinase At2g43590 (264 aa).

A signal peptide spans 1-24 (MAFTKISLVLLLCLLGFFSETVKS). The region spanning 25–59 (QNCGCAPNLCCSQFGYCGTDDAYCGVGCRSGPCRG) is the Chitin-binding type-1 domain. Cystine bridges form between cysteine 27-cysteine 35, cysteine 29-cysteine 41, cysteine 34-cysteine 48, and cysteine 52-cysteine 57. Positions 66–264 (GSVGSIVTQG…GVDPGPNLSC (199 aa)) are catalytic. Catalysis depends on glutamate 128, which acts as the Proton donor. Asparagine 261 is a glycosylation site (N-linked (GlcNAc...) asparagine).

The protein belongs to the glycosyl hydrolase 19 family. Chitinase class I subfamily.

It catalyses the reaction Random endo-hydrolysis of N-acetyl-beta-D-glucosaminide (1-&gt;4)-beta-linkages in chitin and chitodextrins.. The polypeptide is Endochitinase At2g43590 (Arabidopsis thaliana (Mouse-ear cress)).